A 631-amino-acid polypeptide reads, in one-letter code: Nucleoside triphosphatase I (631 aa).

A Helicase ATP-binding domain is found at 42-204; that stretch reads FLGLDSMHSL…TMLVNLLRPG (163 aa). 55-62 serves as a coordination point for ATP; it reads HETGVGKT. The short motif at 141–144 is the DEXH box element; sequence DECH. In terms of domain architecture, Helicase C-terminal spans 367-532; the sequence is KFIDVCLGIL…EFVQLFRVFK (166 aa). The binding to the cap-specific mRNA (nucleoside-2'-O-)-methyltransferase stretch occupies residues 457-524; it reads DIFILDMTWN…EIIQSKSKEF (68 aa).

The protein belongs to the helicase family. NPH I subfamily. As to quaternary structure, monomer. Interacts (via C-terminus) with RAP94/OPG109 (via N-terminus). Interacts with the cap-specific mRNA (nucleoside-2'-O-)-methyltransferase OPG102.

Its subcellular location is the virion. The enzyme catalyses a ribonucleoside 5'-triphosphate + H2O = a ribonucleoside 5'-diphosphate + phosphate + H(+). DNA-dependent ATPase that acts as a 5' to 3' translocase on single-stranded DNA and thereby plays a role in transcription termination of viral early genes. Uses forward translocation in concert with the viral RNA polymerase RAP94/OPG109 subunit and the capping enzyme/VTF to catalyze release of UUUUUNU-containing nascent RNA from the elongation complex. In addition, acts as a positive elongation factor to assist transcription through problematic sequences. This is Nucleoside triphosphatase I (OPG123) from Variola virus (isolate Human/India/Ind3/1967) (VARV).